The primary structure comprises 238 residues: Ion-translocating oxidoreductase complex subunit E (238 aa).

A run of 6 helical transmembrane segments spans residues 20-40 (ALVQLLGLCPLLAVSSSVVNA), 41-61 (LGLGIATLLVLVISNSFVSLI), 72-92 (PAFVMIIASAVTCTELLMKAF), 95-115 (ELYQILGLFIPLIVTNCAVLG), 130-150 (AVDGFMMGLGFMLVLVAVGAV), and 185-205 (NVIFALLPPGAFIVVGMLIAA).

This sequence belongs to the NqrDE/RnfAE family. In terms of assembly, the complex is composed of six subunits: RnfA, RnfB, RnfC, RnfD, RnfE and RnfG.

It localises to the cell inner membrane. Functionally, part of a membrane-bound complex that couples electron transfer with translocation of ions across the membrane. This Cellvibrio japonicus (strain Ueda107) (Pseudomonas fluorescens subsp. cellulosa) protein is Ion-translocating oxidoreductase complex subunit E.